Consider the following 146-residue polypeptide: Hemoglobin subunit beta (146 aa).

Position 1 is an N-acetylvaline (valine 1). Residues 2–146 (HLTGEEKSAV…VANALAHKYH (145 aa)) form the Globin domain. Threonine 12 carries the post-translational modification Phosphothreonine. The residue at position 44 (serine 44) is a Phosphoserine. Lysine 59 bears the N6-acetyllysine mark. Histidine 63 is a binding site for heme b. Lysine 82 carries the post-translational modification N6-acetyllysine. Position 92 (histidine 92) interacts with heme b. Position 93 is an S-nitrosocysteine (cysteine 93). An N6-acetyllysine modification is found at lysine 144.

The protein belongs to the globin family. As to quaternary structure, heterotetramer of two alpha chains and two beta chains. Red blood cells.

Its function is as follows. Involved in oxygen transport from the lung to the various peripheral tissues. The chain is Hemoglobin subunit beta (HBB) from Loris tardigradus (Slender loris).